Here is a 352-residue protein sequence, read N- to C-terminus: Secretion system apparatus protein SsaU (352 aa).

Transmembrane regions (helical) follow at residues 34–54 (LIAL…ILIE), 89–109 (LGAG…GVVI), 144–164 (LKVI…ASTF), and 176–196 (VLVV…FYIV).

This sequence belongs to the type III secretion exporter family.

It is found in the cell membrane. Part of a type III secretion system. This is Secretion system apparatus protein SsaU (ssaU) from Salmonella typhimurium (strain LT2 / SGSC1412 / ATCC 700720).